A 945-amino-acid polypeptide reads, in one-letter code: Isoleucine--tRNA ligase (945 aa).

The 'HIGH' region motif lies at 66–76 (PYANGDIHLGH). Position 581 (Glu-581) interacts with L-isoleucyl-5'-AMP. Positions 622-626 (KMSKS) match the 'KMSKS' region motif. Lys-625 contacts ATP. Residues Cys-908, Cys-911, Cys-928, and Cys-931 each contribute to the Zn(2+) site.

It belongs to the class-I aminoacyl-tRNA synthetase family. IleS type 1 subfamily. As to quaternary structure, monomer. The cofactor is Zn(2+).

It is found in the cytoplasm. The enzyme catalyses tRNA(Ile) + L-isoleucine + ATP = L-isoleucyl-tRNA(Ile) + AMP + diphosphate. Catalyzes the attachment of isoleucine to tRNA(Ile). As IleRS can inadvertently accommodate and process structurally similar amino acids such as valine, to avoid such errors it has two additional distinct tRNA(Ile)-dependent editing activities. One activity is designated as 'pretransfer' editing and involves the hydrolysis of activated Val-AMP. The other activity is designated 'posttransfer' editing and involves deacylation of mischarged Val-tRNA(Ile). This chain is Isoleucine--tRNA ligase, found in Burkholderia cenocepacia (strain HI2424).